A 767-amino-acid chain; its full sequence is DNA topoisomerase 1 (767 aa).

Residues 1-23 (MSGDHLHNDSQIEADFRLNDSHK) show a composition bias toward basic and acidic residues. The interval 1–201 (MSGDHLHNDS…NKKKKPKKEE (201 aa)) is disordered. At Ser-2 the chain carries N-acetylserine. Residues Ser-2 and Ser-10 each carry the phosphoserine modification. The segment covering 24–39 (HKDKHKDREHRHKEHK) has biased composition (basic residues). Basic and acidic residues predominate over residues 40 to 110 (KDKEKDREKS…DAKIKKEKEN (71 aa)). Position 59 is a phosphoserine (Ser-59). Lys-103 is covalently cross-linked (Glycyl lysine isopeptide (Lys-Gly) (interchain with G-Cter in SUMO2)). Residue Lys-105 forms a Glycyl lysine isopeptide (Lys-Gly) (interchain with G-Cter in SUMO); alternate linkage. Residue Lys-105 forms a Glycyl lysine isopeptide (Lys-Gly) (interchain with G-Cter in SUMO2); alternate linkage. Position 114 is a phosphoserine (Ser-114). Lys-119 is covalently cross-linked (Glycyl lysine isopeptide (Lys-Gly) (interchain with G-Cter in SUMO); alternate). Residue Lys-119 forms a Glycyl lysine isopeptide (Lys-Gly) (interchain with G-Cter in SUMO2); alternate linkage. Lys-119 participates in a covalent cross-link: Glycyl lysine isopeptide (Lys-Gly) (interchain with G-Cter in SUMO1); alternate. The span at 131 to 168 (PKEDIKPLKRPRDEDDADYKPKKIKTEDIKKEKKRKLE) shows a compositional bias: basic and acidic residues. Glycyl lysine isopeptide (Lys-Gly) (interchain with G-Cter in SUMO2) cross-links involve residues Lys-136 and Lys-150. Residue Lys-155 forms a Glycyl lysine isopeptide (Lys-Gly) (interchain with G-Cter in SUMO); alternate linkage. A Glycyl lysine isopeptide (Lys-Gly) (interchain with G-Cter in SUMO2); alternate cross-link involves residue Lys-155. Residues Lys-160 and Lys-166 each participate in a glycyl lysine isopeptide (Lys-Gly) (interchain with G-Cter in SUMO2) cross-link. A Glycyl lysine isopeptide (Lys-Gly) (interchain with G-Cter in SUMO2); alternate cross-link involves residue Lys-174. An N6-acetyllysine; alternate modification is found at Lys-174. Residues 181–201 (KDKDKKVPEPDNKKKKPKKEE) show a composition bias toward basic and acidic residues. Lys-206 is covalently cross-linked (Glycyl lysine isopeptide (Lys-Gly) (interchain with G-Cter in SUMO2)). Position 282 is an N6-acetyllysine (Lys-282). A Glycyl lysine isopeptide (Lys-Gly) (interchain with G-Cter in SUMO2) cross-link involves residue Lys-338. 2 interaction with DNA regions span residues 427–428 (KY) and 490–495 (RAGNEK). Positions 434–767 (SSRIKGEKDW…IDMADEDYEF (334 aa)) constitute a Topo IB-type catalytic domain. Phosphoserine; by CK2 is present on Ser-508. Lys-551 is covalently cross-linked (Glycyl lysine isopeptide (Lys-Gly) (interchain with G-Cter in SUMO2)). An interaction with DNA region spans residues 587–589 (TAK). Residues Lys-644, Lys-702, and Lys-714 each participate in a glycyl lysine isopeptide (Lys-Gly) (interchain with G-Cter in SUMO2) cross-link. Tyr-725 serves as the catalytic O-(3'-phospho-DNA)-tyrosine intermediate.

The protein belongs to the type IB topoisomerase family. As to quaternary structure, monomer. Interacts with ERCC6. Interacts with TPRN; TPRN interacts with a number of DNA damage response proteins, is recruited to sites of DNA damage and may play a role in DNA damage repair. Sumoylated. Lys-119 is the main site of sumoylation. Sumoylation plays a role in partitioning TOP1 between nucleoli and nucleoplasm. Levels are dramatically increased on camptothecin (CPT) treatment. Post-translationally, phosphorylation at Ser-508 by CK2 increases binding to supercoiled DNA and sensitivity to camptothecin.

Its subcellular location is the nucleus. It localises to the nucleolus. The protein resides in the nucleoplasm. The catalysed reaction is ATP-independent breakage of single-stranded DNA, followed by passage and rejoining.. Its activity is regulated as follows. Specifically inhibited by camptothecin (CPT), a plant alkaloid with antitumor activity. Functionally, releases the supercoiling and torsional tension of DNA introduced during the DNA replication and transcription by transiently cleaving and rejoining one strand of the DNA duplex. Introduces a single-strand break via transesterification at a target site in duplex DNA. The scissile phosphodiester is attacked by the catalytic tyrosine of the enzyme, resulting in the formation of a DNA-(3'-phosphotyrosyl)-enzyme intermediate and the expulsion of a 5'-OH DNA strand. The free DNA strand then rotates around the intact phosphodiester bond on the opposing strand, thus removing DNA supercoils. Finally, in the religation step, the DNA 5'-OH attacks the covalent intermediate to expel the active-site tyrosine and restore the DNA phosphodiester backbone. Regulates the alternative splicing of tissue factor (F3) pre-mRNA in endothelial cells. Involved in the circadian transcription of the core circadian clock component BMAL1 by altering the chromatin structure around the ROR response elements (ROREs) on the BMAL1 promoter. The chain is DNA topoisomerase 1 (TOP1) from Chlorocebus aethiops (Green monkey).